A 371-amino-acid chain; its full sequence is Putative RING finger protein ORF117 (371 aa).

The RING-type zinc-finger motif lies at 72 to 108 (CCICFRKDVIYKEVPCGHYICVECYKEPIRNVCPECN). Over residues 178–192 (EEEMNESEAEEEEPV) the composition is skewed to acidic residues. Positions 178–218 (EEEMNESEAEEEEPVPEIAQFEALNTPPPPPTNRRPKIRRP) are disordered.

This Magallana gigas (Pacific oyster) protein is Putative RING finger protein ORF117.